The chain runs to 119 residues: Ribonuclease P protein component (119 aa).

Belongs to the RnpA family. As to quaternary structure, consists of a catalytic RNA component (M1 or rnpB) and a protein subunit.

The catalysed reaction is Endonucleolytic cleavage of RNA, removing 5'-extranucleotides from tRNA precursor.. RNaseP catalyzes the removal of the 5'-leader sequence from pre-tRNA to produce the mature 5'-terminus. It can also cleave other RNA substrates such as 4.5S RNA. The protein component plays an auxiliary but essential role in vivo by binding to the 5'-leader sequence and broadening the substrate specificity of the ribozyme. The protein is Ribonuclease P protein component of Coprothermobacter proteolyticus (strain ATCC 35245 / DSM 5265 / OCM 4 / BT).